The chain runs to 189 residues: Interferon alpha-10 (189 aa).

A signal peptide spans 1 to 23; sequence MALSFSLLMAVLVLSYKSICSLG. 2 disulfide bridges follow: Cys24/Cys122 and Cys52/Cys162.

It belongs to the alpha/beta interferon family.

The protein resides in the secreted. Functionally, produced by macrophages, IFN-alpha have antiviral activities. Interferon stimulates the production of two enzymes: a protein kinase and an oligoadenylate synthetase. In Homo sapiens (Human), this protein is Interferon alpha-10 (IFNA10).